The primary structure comprises 230 residues: Cytochrome c oxidase subunit 2 (230 aa).

The Mitochondrial intermembrane portion of the chain corresponds to 1-14; that stretch reads MAHPAQLGFQDAAS. A helical membrane pass occupies residues 15-45; it reads PVMEELLCFHDHALMIVFLISTLVLYIIIAM. Residues 46-59 are Mitochondrial matrix-facing; the sequence is VSTKLTNKFILDSQ. Residues 60–87 traverse the membrane as a helical segment; that stretch reads EIEIVWTVLPAIILILIALPSLRILYLM. The Mitochondrial intermembrane portion of the chain corresponds to 88–230; it reads DEINDPHVTI…NWSSAMLEDA (143 aa). 6 residues coordinate Cu cation: histidine 161, cysteine 196, glutamate 198, cysteine 200, histidine 204, and methionine 207. Mg(2+) is bound at residue glutamate 198.

It belongs to the cytochrome c oxidase subunit 2 family. As to quaternary structure, component of the cytochrome c oxidase (complex IV, CIV), a multisubunit enzyme composed of 14 subunits. The complex is composed of a catalytic core of 3 subunits MT-CO1, MT-CO2 and MT-CO3, encoded in the mitochondrial DNA, and 11 supernumerary subunits COX4I, COX5A, COX5B, COX6A, COX6B, COX6C, COX7A, COX7B, COX7C, COX8 and NDUFA4, which are encoded in the nuclear genome. The complex exists as a monomer or a dimer and forms supercomplexes (SCs) in the inner mitochondrial membrane with NADH-ubiquinone oxidoreductase (complex I, CI) and ubiquinol-cytochrome c oxidoreductase (cytochrome b-c1 complex, complex III, CIII), resulting in different assemblies (supercomplex SCI(1)III(2)IV(1) and megacomplex MCI(2)III(2)IV(2)). Found in a complex with TMEM177, COA6, COX18, COX20, SCO1 and SCO2. Interacts with TMEM177 in a COX20-dependent manner. Interacts with COX20. Interacts with COX16. The cofactor is Cu cation.

Its subcellular location is the mitochondrion inner membrane. It carries out the reaction 4 Fe(II)-[cytochrome c] + O2 + 8 H(+)(in) = 4 Fe(III)-[cytochrome c] + 2 H2O + 4 H(+)(out). Component of the cytochrome c oxidase, the last enzyme in the mitochondrial electron transport chain which drives oxidative phosphorylation. The respiratory chain contains 3 multisubunit complexes succinate dehydrogenase (complex II, CII), ubiquinol-cytochrome c oxidoreductase (cytochrome b-c1 complex, complex III, CIII) and cytochrome c oxidase (complex IV, CIV), that cooperate to transfer electrons derived from NADH and succinate to molecular oxygen, creating an electrochemical gradient over the inner membrane that drives transmembrane transport and the ATP synthase. Cytochrome c oxidase is the component of the respiratory chain that catalyzes the reduction of oxygen to water. Electrons originating from reduced cytochrome c in the intermembrane space (IMS) are transferred via the dinuclear copper A center (CU(A)) of subunit 2 and heme A of subunit 1 to the active site in subunit 1, a binuclear center (BNC) formed by heme A3 and copper B (CU(B)). The BNC reduces molecular oxygen to 2 water molecules using 4 electrons from cytochrome c in the IMS and 4 protons from the mitochondrial matrix. In Danio rerio (Zebrafish), this protein is Cytochrome c oxidase subunit 2 (mt-co2).